We begin with the raw amino-acid sequence, 400 residues long: NADPH dehydrogenase 1 (400 aa).

FMN-binding residues include threonine 38 and glutamine 115. Histidine 192 and asparagine 195 together coordinate substrate. Tyrosine 197 functions as the Proton donor in the catalytic mechanism. FMN contacts are provided by arginine 244 and arginine 349. Tyrosine 376 contacts substrate.

As to quaternary structure, homodimer or heterodimer. The cofactor is FMN.

The enzyme catalyses A + NADPH + H(+) = AH2 + NADP(+). Its function is as follows. Flavin-dependent enoate reductase that catalyzes the chemo- and stereoslective hydrogenation of electron-poor alkenes. The enzyme is reduced by NADPH, and oxygen, quinones, and alpha,beta-unsaturated aldehydes and ketones can act as electron acceptors to complete catalytic turnover. The physiological oxidant remains elusive. The sequence is that of NADPH dehydrogenase 1 from Saccharomyces pastorianus (Lager yeast).